A 189-amino-acid polypeptide reads, in one-letter code: Auxin-responsive protein IAA6 (189 aa).

The EAR-like (transcriptional repression) motif lies at 13–17 (LRLGL). The region spanning 93–178 (IGYVKVSMDG…SCKRLRIVKR (86 aa)) is the PB1 domain.

It belongs to the Aux/IAA family. As to quaternary structure, homodimers and heterodimers. Interacts with TPL. Highly expressed in stems and flowers.

The protein localises to the nucleus. In terms of biological role, aux/IAA proteins are short-lived transcriptional factors that function as repressors of early auxin response genes at low auxin concentrations. Repression is thought to result from the interaction with auxin response factors (ARFs), proteins that bind to the auxin-responsive promoter element (AuxRE). Formation of heterodimers with ARF proteins may alter their ability to modulate early auxin response genes expression. This is Auxin-responsive protein IAA6 (IAA6) from Arabidopsis thaliana (Mouse-ear cress).